Here is a 160-residue protein sequence, read N- to C-terminus: Large ribosomal subunit protein uL22c (160 aa).

The protein belongs to the universal ribosomal protein uL22 family. In terms of assembly, part of the 50S ribosomal subunit.

The protein localises to the plastid. It localises to the chloroplast. Functionally, this protein binds specifically to 23S rRNA. The globular domain of the protein is located near the polypeptide exit tunnel on the outside of the subunit, while an extended beta-hairpin is found that lines the wall of the exit tunnel in the center of the 70S ribosome. This is Large ribosomal subunit protein uL22c (rpl22) from Nasturtium officinale (Watercress).